Here is a 208-residue protein sequence, read N- to C-terminus: MSNKSSKTSKVSIDLIKQLREKTGVSIKDCKEALRKHDGDIAKALREIQEQGSAIAQEKHNRITVHGRIASYIHINNRMGSLVEINCETDSAANSEEFAKLCQHIAMQIVACPEIKYVKFEDIPEEIKNHYIEVESQSKDLQDKPAQSKNKIIRGRIDKKLRRMCLLDQANIKDDKVTVNDLIKEKINKFKENIQINRFARFTIGEKI.

It belongs to the EF-Ts family.

Its subcellular location is the plastid. It is found in the chloroplast. In terms of biological role, associates with the EF-Tu.GDP complex and induces the exchange of GDP to GTP. It remains bound to the aminoacyl-tRNA.EF-Tu.GTP complex up to the GTP hydrolysis stage on the ribosome. The sequence is that of Elongation factor Ts, chloroplastic (tsf) from Cyanidium caldarium (Red alga).